Consider the following 88-residue polypeptide: Small ribosomal subunit protein uS15 (88 aa).

This sequence belongs to the universal ribosomal protein uS15 family. As to quaternary structure, part of the 30S ribosomal subunit. Forms a bridge to the 50S subunit in the 70S ribosome, contacting the 23S rRNA.

Functionally, one of the primary rRNA binding proteins, it binds directly to 16S rRNA where it helps nucleate assembly of the platform of the 30S subunit by binding and bridging several RNA helices of the 16S rRNA. Its function is as follows. Forms an intersubunit bridge (bridge B4) with the 23S rRNA of the 50S subunit in the ribosome. The polypeptide is Small ribosomal subunit protein uS15 (Syntrophus aciditrophicus (strain SB)).